A 288-amino-acid polypeptide reads, in one-letter code: Polyamine aminopropyltransferase (288 aa).

Positions 9–242 constitute a PABS domain; sequence SEWLDEYHQG…GLWSWTFASM (234 aa). Gln36 serves as a coordination point for S-methyl-5'-thioadenosine. Positions 67 and 91 each coordinate spermidine. S-methyl-5'-thioadenosine is bound by residues Glu111 and 143-144; that span reads NG. Asp162 functions as the Proton acceptor in the catalytic mechanism. Residue Pro169 participates in S-methyl-5'-thioadenosine binding.

This sequence belongs to the spermidine/spermine synthase family. In terms of assembly, homodimer or homotetramer.

The protein localises to the cytoplasm. The enzyme catalyses S-adenosyl 3-(methylsulfanyl)propylamine + putrescine = S-methyl-5'-thioadenosine + spermidine + H(+). Its pathway is amine and polyamine biosynthesis; spermidine biosynthesis; spermidine from putrescine: step 1/1. Catalyzes the irreversible transfer of a propylamine group from the amino donor S-adenosylmethioninamine (decarboxy-AdoMet) to putrescine (1,4-diaminobutane) to yield spermidine. The chain is Polyamine aminopropyltransferase from Prochlorococcus marinus (strain NATL2A).